A 279-amino-acid chain; its full sequence is Putative pyruvate, phosphate dikinase regulatory protein (279 aa).

157–164 (GVSRTSKT) provides a ligand contact to ADP.

It belongs to the pyruvate, phosphate/water dikinase regulatory protein family. PDRP subfamily.

It carries out the reaction N(tele)-phospho-L-histidyl/L-threonyl-[pyruvate, phosphate dikinase] + ADP = N(tele)-phospho-L-histidyl/O-phospho-L-threonyl-[pyruvate, phosphate dikinase] + AMP + H(+). It catalyses the reaction N(tele)-phospho-L-histidyl/O-phospho-L-threonyl-[pyruvate, phosphate dikinase] + phosphate + H(+) = N(tele)-phospho-L-histidyl/L-threonyl-[pyruvate, phosphate dikinase] + diphosphate. Its function is as follows. Bifunctional serine/threonine kinase and phosphorylase involved in the regulation of the pyruvate, phosphate dikinase (PPDK) by catalyzing its phosphorylation/dephosphorylation. This is Putative pyruvate, phosphate dikinase regulatory protein from Lactobacillus helveticus (strain DPC 4571).